The primary structure comprises 366 residues: Histidinol-phosphate aminotransferase 2 (366 aa).

A compositionally biased stretch (polar residues) spans 1 to 11 (MQVKDQLSSLQ). The tract at residues 1 to 21 (MQVKDQLSSLQPYKPGKSPEQ) is disordered. At K222 the chain carries N6-(pyridoxal phosphate)lysine.

This sequence belongs to the class-II pyridoxal-phosphate-dependent aminotransferase family. Histidinol-phosphate aminotransferase subfamily. In terms of assembly, homodimer. The cofactor is pyridoxal 5'-phosphate.

The enzyme catalyses L-histidinol phosphate + 2-oxoglutarate = 3-(imidazol-4-yl)-2-oxopropyl phosphate + L-glutamate. Its pathway is amino-acid biosynthesis; L-histidine biosynthesis; L-histidine from 5-phospho-alpha-D-ribose 1-diphosphate: step 7/9. This chain is Histidinol-phosphate aminotransferase 2 (hisC2), found in Bacillus anthracis.